The following is a 200-amino-acid chain: Large ribosomal subunit protein bL25 (200 aa).

This sequence belongs to the bacterial ribosomal protein bL25 family. CTC subfamily. In terms of assembly, part of the 50S ribosomal subunit; part of the 5S rRNA/L5/L18/L25 subcomplex. Contacts the 5S rRNA. Binds to the 5S rRNA independently of L5 and L18.

Its function is as follows. This is one of the proteins that binds to the 5S RNA in the ribosome where it forms part of the central protuberance. The protein is Large ribosomal subunit protein bL25 of Pseudomonas fluorescens (strain Pf0-1).